Here is a 368-residue protein sequence, read N- to C-terminus: MAQSVPPASSHGQLTVGEVGTSVNSVPYARHEEIIRAPLTYLLNLPGKDVRSKMIAAFNQWLKIPEDKLDVIKRIIMLLHNASLLLDDIQDSSKLRRGLPVSHSIFGIAQTINAANYAFFLAQQELPKLGDARAFEIFTEELLHLHRGQGMDIYWRDASICPTEEEYFTMVSNKTGGLFRLAVKLMQLASESDKDYVPLVNVLGVIFQIRDDYLNLQSGNYAKNKGFGEDLTEGKFSFPIIHSIRSNPANIQLSSILKQRTTDIDVKLFAVGYIESTGSFEHCRRKLVELTAEARAIMENIADGRSEDLESYACILLSKLILYNRLTYKVPAAQVIHGASGGYSTAPKPRILAQQIATVRAPHLQYAT.

Residues Lys48, Arg51, and His80 each contribute to the isopentenyl diphosphate site. Mg(2+) contacts are provided by Asp87 and Asp91. Arg96 is a dimethylallyl diphosphate binding site. Arg97 lines the isopentenyl diphosphate pocket. Lys174, Thr175, and Gln208 together coordinate dimethylallyl diphosphate. Residue Asp211 coordinates Mg(2+). Positions 215, 225, and 235 each coordinate dimethylallyl diphosphate.

Belongs to the FPP/GGPP synthase family. Mg(2+) serves as cofactor.

The enzyme catalyses isopentenyl diphosphate + dimethylallyl diphosphate = (2E)-geranyl diphosphate + diphosphate. The catalysed reaction is isopentenyl diphosphate + (2E)-geranyl diphosphate = (2E,6E)-farnesyl diphosphate + diphosphate. It catalyses the reaction isopentenyl diphosphate + (2E,6E)-farnesyl diphosphate = (2E,6E,10E)-geranylgeranyl diphosphate + diphosphate. The protein operates within secondary metabolite biosynthesis; terpenoid biosynthesis. Its function is as follows. Geranylgeranyl pyrophosphate synthase; part of the gene cluster that mediates the biosynthesis of diterpenoid pyrones. The first step of the pathway is the synthesis of the alpha-pyrone moiety by the polyketide synthase dpfgA via condensation of one acetyl-CoA starter unit with 3 malonyl-CoA units and 2 methylations. The alpha-pyrone is then combined with geranylgeranyl pyrophosphate (GGPP) formed by the GGPP synthase dpfgD through the action of the prenyltransferase dpfgC to yield a linear alpha-pyrone diterpenoid. Subsequent steps in the diterpenoid pyrone biosynthetic pathway involve the decalin core formation, which is initiated by the epoxidation of the C10-C11 olefin by the FAD-dependent oxidoreductase dpfgE, and is followed by a cyclization cascade catalyzed by the terpene cyclase dpfgB. The short chain dehydrogenase/reductase dpfgG then oxidizes the 8S hydroxy group to a ketone and the short chain dehydrogenase/reductase dpfgH reduces the ketone to the 8R hydroxy group to yield higginsianin B. Higginsianin B is further methylated by the methyltransferase dpfgI to produce the intermediate named FDDP B. The cytochrome P450 monooxygenase dfgpJ then catalyzes a three-step oxidation at C-27 to generate a carboxylic acid as well as C-26 hydroxylation. Finally, methyltransferase dpfgK methylates the carboxylic acid generated by dpfgJ, yielding the final diterpenoid pyrones from the pathway which were named FDDP D and FDDP E. The sequence is that of Geranylgeranyl pyrophosphate synthase dpfgD from Gibberella zeae (strain ATCC MYA-4620 / CBS 123657 / FGSC 9075 / NRRL 31084 / PH-1) (Wheat head blight fungus).